The sequence spans 246 residues: 5'-nucleotidase SurE (246 aa).

A divalent metal cation contacts are provided by aspartate 8, aspartate 9, serine 39, and asparagine 91.

It belongs to the SurE nucleotidase family. A divalent metal cation serves as cofactor.

The protein resides in the cytoplasm. The catalysed reaction is a ribonucleoside 5'-phosphate + H2O = a ribonucleoside + phosphate. Nucleotidase that shows phosphatase activity on nucleoside 5'-monophosphates. This is 5'-nucleotidase SurE from Mannheimia succiniciproducens (strain KCTC 0769BP / MBEL55E).